We begin with the raw amino-acid sequence, 311 residues long: Probable manganese-dependent inorganic pyrophosphatase (311 aa).

Mn(2+) contacts are provided by His-9, Asp-13, Asp-15, Asp-75, His-97, and Asp-149.

Belongs to the PPase class C family. Mn(2+) is required as a cofactor.

The protein localises to the cytoplasm. The catalysed reaction is diphosphate + H2O = 2 phosphate + H(+). The polypeptide is Probable manganese-dependent inorganic pyrophosphatase (Lactobacillus acidophilus (strain ATCC 700396 / NCK56 / N2 / NCFM)).